A 107-amino-acid polypeptide reads, in one-letter code: Envelope small membrane protein (107 aa).

Over 1 to 11 (MMNLVNKSLEE) the chain is Virion surface. The chain crosses the membrane as a helical span at residues 12-32 (NGSFLTAVYIFCAFVALYLLG). Residues 33 to 107 (RALHAFVQAA…NFQNDGKLHS (75 aa)) are Intravirion-facing.

This sequence belongs to the gammacoronaviruses E protein family. As to quaternary structure, homooligomer. Interacts with the M membrane protein in the budding compartment of the host cell, which is located between endoplasmic reticulum and the Golgi complex. The cytoplasmic tails of both proteins are important for this function. Interacts with Nucleoprotein.

It is found in the host Golgi apparatus membrane. Its function is as follows. Plays a central role in virus morphogenesis and assembly. Acts as a viroporin and self-assembles in host membranes forming pentameric protein-lipid pores that allow ion transport. Also plays a role in the induction of apoptosis. This is Envelope small membrane protein from Gallus gallus (Chicken).